We begin with the raw amino-acid sequence, 276 residues long: Src-like-adapter (276 aa).

Residue glycine 2 is the site of N-myristoyl glycine attachment. The SH3 domain occupies 22–82; it reads LDSDFLAVLS…PGICVARVYH (61 aa). Residues 84-175 form the SH2 domain; the sequence is WLFEGLGRDK…GLCCVLTTPC (92 aa). Residues 212–276 are SLA C-terminal; sequence EGTENPLGVD…FFSSPPYFED (65 aa). At serine 253 the chain carries Phosphoserine. The residue at position 273 (tyrosine 273) is a Phosphotyrosine.

As to quaternary structure, interacts with EPHA2, VAV1, LCP2 and PDGFRB. Homodimer. Homodimerization and interaction with phosphorylated CBL occurs via its C-terminal domain. Interacts with phosphorylated proteins ZAP70, CD3Z, SYK and LAT via its SH2 domain. Expressed in lung and fetal brain. Weakly expressed in heart, adult brain, placenta, liver, skeletal muscle, kidney and pancreas.

It localises to the cytoplasm. The protein localises to the endosome. Functionally, adapter protein, which negatively regulates T-cell receptor (TCR) signaling. Inhibits T-cell antigen-receptor induced activation of nuclear factor of activated T-cells. Involved in the negative regulation of positive selection and mitosis of T-cells. May act by linking signaling proteins such as ZAP70 with CBL, leading to a CBL dependent degradation of signaling proteins. The sequence is that of Src-like-adapter (SLA) from Homo sapiens (Human).